Consider the following 1095-residue polypeptide: Solute carrier family 12 member 1 (1095 aa).

Topologically, residues 1–173 are cytoplasmic; sequence MSVSIPSNSV…EEDMTGVVKF (173 aa). An RFXV motif motif is present at residues 16–19; it reads RFQV. The segment at 29-49 is disordered; that stretch reads AAAVGDSADPPHYEETSFGDE. Phosphoserine is present on residues S57 and S87. Phosphothreonine is present on residues T91, T96, T101, and T114. A Phosphoserine modification is found at S116. Position 126 is a phosphoserine; by AMPK (S126). Position 144 is a phosphoserine (S144). The helical transmembrane segment at 174-194 threads the bilayer; it reads GWVKGVLVRCMLNIWGVMLFI. The Extracellular portion of the chain corresponds to 195–197; sequence RLS. A helical membrane pass occupies residues 198 to 218; sequence WIVGEAGIGLGVLIILLSTMV. The Cytoplasmic segment spans residues 219–255; sequence TSITGLSTSAIATNGFVRGGGAYYLISRSLGPEFGGS. A helical membrane pass occupies residues 256-276; the sequence is IGLIFAFANAVAVAMYVVGFA. At 277–298 the chain is on the extracellular side; the sequence is ETVVDLLKESDSMMVDPTNDIR. A helical transmembrane segment spans residues 299-319; that stretch reads IIGSITVVILLGISVAGMEWE. The Cytoplasmic portion of the chain corresponds to 320-323; that stretch reads AKAQ. A helical transmembrane segment spans residues 324 to 344; sequence VILLVILLIAIANFFIGTVIP. Residues 345 to 375 lie on the Extracellular side of the membrane; that stretch reads SNNEKKSRGFFNYQASIFAENFGPSFTKGEG. Residues 376–396 traverse the membrane as a helical segment; that stretch reads FFSVFAIFFPAATGILAGANI. Residues 397–413 lie on the Cytoplasmic side of the membrane; it reads SGDLEDPQDAIPRGTML. A helical membrane pass occupies residues 414 to 434; the sequence is AIFITTVAYIGVAICVAACVV. Residues 435-546 are Extracellular-facing; that stretch reads RDATGSMNDT…NNEPLRGYFL (112 aa). Residues N442 and N452 are each glycosylated (N-linked (GlcNAc...) asparagine). Transmembrane regions (helical) follow at residues 547-567 and 568-588; these read TFVIAMAFILIAELNVIAPII and SNFFLASYALINFSCFHASYA. The Extracellular segment spans residues 589-605; it reads KSPGWRPAYGIYNMWVS. The helical transmembrane segment at 606–626 threads the bilayer; the sequence is LFGAILCCAVMFVINWWAAVI. Over 627–1095 the chain is Cytoplasmic; that stretch reads TYVIELFLYI…NHKNVLTFYS (469 aa).

It belongs to the SLC12A transporter family. In terms of assembly, when phosphorylated, interacts with PPP3CB. In terms of processing, phosphorylated at Ser-87, Thr-96 and Thr-101 by OXSR1/OSR1 and STK39/SPAK downstream of WNK kinases (WNK1, WNK2, WNK3 or WNK4), promoting its activity. Short-term cyclosporine administration increases SLC12A1 phosphorylation in kidney thick ascending limb, possibly through the inhibition of PPP3CB/calcineurin A beta phosphatase. As to expression, predominantly expressed in kidney (at protein level). Kidney-specific; most highly expressed in the outer stripe of outer medulla (at protein level). In terms of tissue distribution, kidney-specific; most highly expressed in the cortical thick ascending limb (at protein level). As to expression, kidney-specific; most highly expressed in the inner stripe of outer medulla (at protein level).

The protein resides in the apical cell membrane. The enzyme catalyses K(+)(out) + 2 chloride(out) + Na(+)(out) = K(+)(in) + 2 chloride(in) + Na(+)(in). Its activity is regulated as follows. Activated following phosphorylation by OXSR1/OSR1 and STK39/SPAK downstream of WNK kinases (WNK1, WNK2, WNK3 or WNK4). With respect to regulation, inhibited by mercury dichloride and diuretic drug bumetaide. Inactive in isotonic conditions. Functionally, renal sodium, potassium and chloride ion cotransporter that mediates the transepithelial NaCl reabsorption in the thick ascending limb and plays an essential role in the urinary concentration and volume regulation. Electrically silent transporter system. High affinity, high capacity cotransporter for sodium, potassium and chloride ions, with a coupling ratio 1Na(+):1K(+):2Cl(-). In terms of biological role, high affinity, low capacity cotransporter for sodium, potassium and chloride ions, with a coupling ratio 1Na(+):1K(+):2Cl(-). Its function is as follows. Low affinity, low capacity cotransporter for sodium, potassium and chloride ions, with a coupling ratio 1Na(+):1K(+):2Cl(-). The sequence is that of Solute carrier family 12 member 1 (Slc12a1) from Mus musculus (Mouse).